A 112-amino-acid chain; its full sequence is Cytochrome c 2.1 (112 aa).

4 residues coordinate heme c: Cys20, Cys23, His24, and Met85.

This sequence belongs to the cytochrome c family. In terms of processing, binds 1 heme c group covalently per subunit.

Its subcellular location is the mitochondrion intermembrane space. Its function is as follows. Electron carrier protein. The oxidized form of the cytochrome c heme group can accept an electron from the heme group of the cytochrome c1 subunit of cytochrome reductase. Cytochrome c then transfers this electron to the cytochrome oxidase complex, the final protein carrier in the mitochondrial electron-transport chain. This Caenorhabditis briggsae protein is Cytochrome c 2.1.